The primary structure comprises 265 residues: 14-3-3-like protein GF14 nu (265 aa).

Phosphoserine occurs at positions 67, 109, and 190. At Thr-211 the chain carries Phosphothreonine. The segment at 242 to 265 is disordered; sequence AGGDEIKEASKHEPEEGKPAETGQ. Residues 245-265 are compositionally biased toward basic and acidic residues; sequence DEIKEASKHEPEEGKPAETGQ.

This sequence belongs to the 14-3-3 family. As to quaternary structure, component of the SERK1 signaling complex, composed of KAPP, CDC48A, GRF6 or GRF7, SERK1, SERK2, SERK3/BAK1 and BRI1. Interacts with DREB1A and DREB1B in the nucleus. Interacts with CINV1.

The protein resides in the nucleus. It is found in the cytoplasm. Functionally, is associated with a DNA binding complex that binds to the G box, a well-characterized cis-acting DNA regulatory element found in plant genes. This is 14-3-3-like protein GF14 nu (GRF7) from Arabidopsis thaliana (Mouse-ear cress).